Reading from the N-terminus, the 207-residue chain is Methylated-DNA--protein-cysteine methyltransferase (207 aa).

Residues tyrosine 123 and arginine 137 each contribute to the DNA site. Cysteine 154 acts as the Nucleophile; methyl group acceptor in catalysis. Residue serine 160 participates in DNA binding.

It belongs to the MGMT family.

Its subcellular location is the nucleus. It catalyses the reaction a 6-O-methyl-2'-deoxyguanosine in DNA + L-cysteinyl-[protein] = S-methyl-L-cysteinyl-[protein] + a 2'-deoxyguanosine in DNA. The catalysed reaction is a 4-O-methyl-thymidine in DNA + L-cysteinyl-[protein] = a thymidine in DNA + S-methyl-L-cysteinyl-[protein]. Its function is as follows. Involved in the cellular defense against the biological effects of O6-methylguanine (O6-MeG) and O4-methylthymine (O4-MeT) in DNA. Repairs the methylated nucleobase in DNA by stoichiometrically transferring the methyl group to a cysteine residue in the enzyme. This is a suicide reaction: the enzyme is irreversibly inactivated. The polypeptide is Methylated-DNA--protein-cysteine methyltransferase (MGT1) (Candida glabrata (strain ATCC 2001 / BCRC 20586 / JCM 3761 / NBRC 0622 / NRRL Y-65 / CBS 138) (Yeast)).